Consider the following 172-residue polypeptide: Large ribosomal subunit protein uL10 (172 aa).

Belongs to the universal ribosomal protein uL10 family. As to quaternary structure, part of the ribosomal stalk of the 50S ribosomal subunit. The N-terminus interacts with L11 and the large rRNA to form the base of the stalk. The C-terminus forms an elongated spine to which L12 dimers bind in a sequential fashion forming a multimeric L10(L12)X complex.

In terms of biological role, forms part of the ribosomal stalk, playing a central role in the interaction of the ribosome with GTP-bound translation factors. The protein is Large ribosomal subunit protein uL10 of Chlorobium phaeovibrioides (strain DSM 265 / 1930) (Prosthecochloris vibrioformis (strain DSM 265)).